The chain runs to 430 residues: Cortical fragment-lytic enzyme (430 aa).

2 consecutive LysM domains span residues 3–47 (QIVT…ALIV) and 52–96 (NNYY…QLYI). In terms of domain architecture, GH18 spans 104 to 430 (VESIAYLQPS…VENFTITKKG (327 aa)). Glu-219 (proton donor) is an active-site residue.

This sequence belongs to the glycosyl hydrolase 18 family. Chitinase class II subfamily.

It localises to the forespore. Functionally, N-acetylglucosaminidase involved in cortex peptidoglycan degradation during germination. Cleaves only partially degraded spore peptidoglycans. Recognizes muramic acid delta-lactam residues specific to spore peptidoglycans. In Bacillus anthracis, this protein is Cortical fragment-lytic enzyme.